The following is a 482-amino-acid chain: Nuclear transcription factor Y subunit nfya-1 (482 aa).

The disordered stretch occupies residues Met1 to Pro160. The span at Ser72–Ala93 shows a compositional bias: polar residues. Low complexity predominate over residues Ser94 to Pro110. Composition is skewed to polar residues over residues His126–Ile135 and Val144–Pro160. Positions Leu306 to Gly329 match the Subunit association domain (SAD) motif. A DNA-binding region (NFYA/HAP2-type) is located at residues Gln336–Thr361. The segment at His344–Ser414 is disordered. Positions Gly353–Lys362 are enriched in basic and acidic residues. Over residues Thr363–Ser375 the composition is skewed to low complexity.

The protein belongs to the NFYA/HAP2 subunit family. In terms of assembly, forms a heterotrimeric transcription factor complex (nfya-1-NF-Y complex) composed of nfya-1, nfyb-1 and nfyc-1, which binds to 5'-CCAAT-3' box motif in the promoters of its target genes. Interacts with the nfyb-1 and nfyc-1 dimer; the interaction is required for subsequent binding to the 5'-CCAAT-3' box motif in DNA. Does not interact with either nfyb-1 or nfyc-1 in their monomeric form. Interacts with mes-3. Expressed in certain parts of the gonads with high expression in fertilized oocytes in the uterus and mature oocytes from the distal to the proximal arm of the gonad, but weak expression in the syncytial ovaries and immature oocytes at the beginning of the proximal arm of the gonad. Highly expressed in the head ganglia neurons and the developing hermaphrodite vulva and male tail. Weakly expressed in most somatic cells. Not expressed in the intestine, the hypodermis, body wall muscle surrounding the pseudocoelomic space, secretory cells in the pharyngeal terminal bulb wall, in the small ganglia surrounding the pharynx and in the neurons running anteriorly to the sensory organs in the head.

It localises to the nucleus. Component of the sequence-specific heterotrimeric transcription factor (nfya-1-NF-Y) which specifically recognizes a 5'-CCAAT-3' box motif found in the promoters of its target genes to regulate their expression and control cellular identity in particular tissue types. In association with the components in the nfya-1-NF-Y complex, represses the expression of the T-box transcription factor tbx-2 throughout larval development, which most likely restricts its expression to certain tissues. May act to repress txb-2 expression in conjunction with tbx-2 itself, which has an autoregulatory role. With the components in this complex, negatively regulates the expression of the homeobox protein egl-5 to spatially restrict its expression in tissues such as the head. May regulate egl-5 expression in association with the mes-2-mes-3-mes-6 complex. This is Nuclear transcription factor Y subunit nfya-1 from Caenorhabditis elegans.